The following is a 795-amino-acid chain: Phenylalanine--tRNA ligase beta subunit (795 aa).

The region spanning 39-148 is the tRNA-binding domain; that stretch reads AGSFHGVVVG…ADAPIGTDIR (110 aa). Positions 401-476 constitute a B5 domain; sequence PKRATITLRR…RVYGYNNIPD (76 aa). Residues D454, D460, E463, and E464 each contribute to the Mg(2+) site. Residues 701–794 enclose the FDX-ACB domain; the sequence is SRFPANRRDI…LKERFQASLR (94 aa).

It belongs to the phenylalanyl-tRNA synthetase beta subunit family. Type 1 subfamily. As to quaternary structure, tetramer of two alpha and two beta subunits. Mg(2+) is required as a cofactor.

The protein localises to the cytoplasm. The catalysed reaction is tRNA(Phe) + L-phenylalanine + ATP = L-phenylalanyl-tRNA(Phe) + AMP + diphosphate + H(+). This Shigella flexneri protein is Phenylalanine--tRNA ligase beta subunit.